The following is a 161-amino-acid chain: MORN repeat-containing protein 5 (161 aa).

MORN repeat units lie at residues 8–30, 31–53, and 54–75; these read YIGEYVDGRMEGKAKYILPTETI, YVGEMKDGMFHGEGTLYFPSGSQ, and YDAIWENGLAIKGTYTFSDGLH.

Expressed in sperm (at protein level).

Its subcellular location is the cell projection. It is found in the cilium. It localises to the flagellum. The sequence is that of MORN repeat-containing protein 5 (MORN5) from Homo sapiens (Human).